The following is a 159-amino-acid chain: Large ribosomal subunit protein uL15 (159 aa).

Residues leucine 21–valine 34 are compositionally biased toward basic residues. Residues leucine 21–arginine 55 are disordered.

Belongs to the universal ribosomal protein uL15 family. Part of the 50S ribosomal subunit.

Binds to the 23S rRNA. This Frankia casuarinae (strain DSM 45818 / CECT 9043 / HFP020203 / CcI3) protein is Large ribosomal subunit protein uL15.